We begin with the raw amino-acid sequence, 205 residues long: MIGKLKGSIEEIGADYVLVDVHGVCYVAYCSARTLSKIGSVGEAVVLFIETYVREDQLKLFGFVSALEREWFNLLQSVQGVGSKVALAVLSTLSPSELANAIALQDKTMISRAPGIGPKVAVRLVTELRNKAPAFAGDASASIGLKQELGEGVASAPVADAVSALTNLGYSRDQAANAVAAALKNGGEGGDSAKLIRLGLKELSR.

Residues 1-64 (MIGKLKGSIE…EDQLKLFGFV (64 aa)) form a domain I region. The interval 65 to 143 (SALEREWFNL…AFAGDASASI (79 aa)) is domain II. Residues 144–153 (GLKQELGEGV) are flexible linker. Residues 153 to 205 (VASAPVADAVSALTNLGYSRDQAANAVAAALKNGGEGGDSAKLIRLGLKELSR) are domain III.

This sequence belongs to the RuvA family. In terms of assembly, homotetramer. Forms an RuvA(8)-RuvB(12)-Holliday junction (HJ) complex. HJ DNA is sandwiched between 2 RuvA tetramers; dsDNA enters through RuvA and exits via RuvB. An RuvB hexamer assembles on each DNA strand where it exits the tetramer. Each RuvB hexamer is contacted by two RuvA subunits (via domain III) on 2 adjacent RuvB subunits; this complex drives branch migration. In the full resolvosome a probable DNA-RuvA(4)-RuvB(12)-RuvC(2) complex forms which resolves the HJ.

The protein localises to the cytoplasm. Functionally, the RuvA-RuvB-RuvC complex processes Holliday junction (HJ) DNA during genetic recombination and DNA repair, while the RuvA-RuvB complex plays an important role in the rescue of blocked DNA replication forks via replication fork reversal (RFR). RuvA specifically binds to HJ cruciform DNA, conferring on it an open structure. The RuvB hexamer acts as an ATP-dependent pump, pulling dsDNA into and through the RuvAB complex. HJ branch migration allows RuvC to scan DNA until it finds its consensus sequence, where it cleaves and resolves the cruciform DNA. This Agrobacterium fabrum (strain C58 / ATCC 33970) (Agrobacterium tumefaciens (strain C58)) protein is Holliday junction branch migration complex subunit RuvA.